A 555-amino-acid chain; its full sequence is Exodeoxyribonuclease 7 large subunit (555 aa).

It belongs to the XseA family. In terms of assembly, heterooligomer composed of large and small subunits.

The protein localises to the cytoplasm. The enzyme catalyses Exonucleolytic cleavage in either 5'- to 3'- or 3'- to 5'-direction to yield nucleoside 5'-phosphates.. In terms of biological role, bidirectionally degrades single-stranded DNA into large acid-insoluble oligonucleotides, which are then degraded further into small acid-soluble oligonucleotides. The sequence is that of Exodeoxyribonuclease 7 large subunit from Chlamydia felis (strain Fe/C-56) (Chlamydophila felis).